Consider the following 450-residue polypeptide: Ammonium transporter Rh type A (450 aa).

Residues methionine 1–lysine 4 are Cytoplasmic-facing. Residues phenylalanine 5–glutamate 25 traverse the membrane as a helical segment. Residues tyrosine 26–tyrosine 72 lie on the Extracellular side of the membrane. N-linked (GlcNAc...) asparagine glycans are attached at residues asparagine 31, asparagine 41, asparagine 52, and asparagine 58. The disordered stretch occupies residues glutamine 34–serine 61. Residues proline 73 to leucine 93 form a helical membrane-spanning segment. At lysine 94–glycine 97 the chain is on the cytoplasmic side. A helical membrane pass occupies residues phenylalanine 98–valine 118. Residues glutamine 119–lysine 134 are Extracellular-facing. A helical transmembrane segment spans residues asparagine 135–glycine 155. At lysine 156–proline 159 the chain is on the cytoplasmic side. Residues isoleucine 160 to valine 180 traverse the membrane as a helical segment. At threonine 181–threonine 189 the chain is on the extracellular side. The helical transmembrane segment at glycine 190–leucine 210 threads the bilayer. At tyrosine 211–aspartate 229 the chain is on the cytoplasmic side. The helical transmembrane segment at leucine 230–isoleucine 250 threads the bilayer. Residues alanine 251–alanine 260 lie on the Extracellular side of the membrane. Residues isoleucine 261–leucine 281 form a helical membrane-spanning segment. Over valine 282 to aspartate 289 the chain is Cytoplasmic. Residues methionine 290 to cysteine 307 traverse the membrane as a helical segment. Residues alanine 308 to glutamate 311 are Extracellular-facing. A helical transmembrane segment spans residues isoleucine 312–tyrosine 332. Residues lysine 333 to cysteine 349 are Cytoplasmic-facing. Residues glycine 350–isoleucine 370 form a helical membrane-spanning segment. At serine 371–alanine 384 the chain is on the extracellular side. A helical transmembrane segment spans residues threonine 385 to leucine 405. Residues lysine 406–valine 450 lie on the Cytoplasmic side of the membrane.

It belongs to the ammonium transporter (TC 2.A.49) family. Rh subfamily. Homodimer. Heterotrimer; a RHCE monomer interacts with a RHAG homodimer. Component of the ankyrin-1 complex in the erythrocyte, composed of ANK1, RHCE, RHAG, SLC4A1, EPB42, GYPA, GYPB and AQP1. Interacts with GYPB (via the N-terminal); this interaction bridges the (RHAG)2(RHCE) heterotrimer with the SLC4A1 Band 3 I dimer complexed with GYPA. In terms of processing, glycosylated.

It is found in the membrane. It carries out the reaction methylamine(out) = methylamine(in). The enzyme catalyses NH4(+)(in) = NH4(+)(out). The catalysed reaction is CO2(out) = CO2(in). In terms of biological role, component of the ankyrin-1 complex, a multiprotein complex involved in the stability and shape of the erythrocyte membrane. Heterotrimer with RHCE (RHAG)2(RHCE), that transports ammonium and its related derivative methylammonium, in both neutral and ionic forms, across the erythrocyte membrane. The transport of NH4(+) is electrogenic and masks the NH3 transport. Also, may act as a CO2 channel. Moreover in erythrocyte, regulates RHD membrane expression and is associated with rhesus blood group antigen expression. The chain is Ammonium transporter Rh type A from Rattus norvegicus (Rat).